The chain runs to 162 residues: Xylulose kinase (162 aa).

The disordered stretch occupies residues 16 to 39 (GGHSATPRPATGPAGPAAHSGRHQ). Over residues 20–33 (ATPRPATGPAGPAA) the composition is skewed to low complexity.

This sequence belongs to the FGGY kinase family.

The catalysed reaction is D-xylulose + ATP = D-xylulose 5-phosphate + ADP + H(+). In terms of biological role, catalyzes the phosphorylation of D-xylulose to D-xylulose 5-phosphate. This chain is Xylulose kinase, found in Actinoplanes sp. (strain ATCC 31351 / 3876) (Ampullariella sp.).